A 401-amino-acid polypeptide reads, in one-letter code: Subtilisin-like protease 10 (401 aa).

The first 19 residues, 1–19 (MLFLKAVIAILSVLPAADA), serve as a signal peptide directing secretion. Positions 20-116 (AAILNFENKQ…IEPDRMASAQ (97 aa)) are excised as a propeptide. One can recognise an Inhibitor I9 domain in the interval 35–112 (SYIVVLKNDI…QVDYIEPDRM (78 aa)). In terms of domain architecture, Peptidase S8 spans 126–401 (SWGLGRISHQ…NRLLYNGSGQ (276 aa)). Residues Asp158 and His189 each act as charge relay system in the active site. N-linked (GlcNAc...) asparagine glycosylation is present at Asn250. Ser347 functions as the Charge relay system in the catalytic mechanism. Asn397 is a glycosylation site (N-linked (GlcNAc...) asparagine).

The protein belongs to the peptidase S8 family.

Its subcellular location is the secreted. Secreted subtilisin-like serine protease with keratinolytic activity that contributes to pathogenicity. This Arthroderma otae (strain ATCC MYA-4605 / CBS 113480) (Microsporum canis) protein is Subtilisin-like protease 10 (SUB10).